The chain runs to 907 residues: METKEEKKERRQGYFARLKKKRQAKQNTETVSANSPGSPVSKTPAEKDDESKVILEQISSSGDNCKFAGEKETVPEKEKRKKKYNQLKDIRRTELKRYYSTDDNQNKTNEKKEKKMVSQKPHGTIEYTAGNQDTINSIALKFNITPNKLVELNKLFTHTIVPGQILFVPETSVARLPSFSPGAPISPSSSDAEYDKLPDADLARKAFKPVERVLSSTSEEDEPVVVKFLKMNCRYFTDGKGVVGGVMIVTPNNIMFDPHKSDPLVIENGCEEYGLICPMEEVVSIALYNDISHMKIKDALPSDIPKDLCPLYRPGEWEDLSSEKDINPFSKFKSLSKEKRQQNGDSPNVPGAKQINPSDKEKSADFEVLQSSESTGSIKSKSLEFYNNITATEHLEKFAADPHVKEPSEEKNVSDIRTKEDSLSGGGDDFIDLEKVPSPMDRGLDRKISLMEGLLADPRELGRTKQQVTKPTTEVQEHFTVDSLEKKDSVEPKADLDLELCEKQDVIPEVNKCVSSPTGKVETALDTKKELEKDKLIEFYLNKDGSGSQSSEDLHKAEIQKGENNKAIGIDLTLSCSKSQADEVHTVKSMELDSCCVGRKAASLESSAAAAEEKDLKESLDSSLVPAVDKTCQETQLDNQSEVRLWLLQKIQVPIEDMLPSKEEKSKTPPMFLCIKVGKPMRKSFVSQSTTVSQQYSKKIKQPEYWFAVPREIITVEEAKRRKSVCSYYGEEDDDDALPVLKHHSALLENMHIEQLARRLPARVQGYPWRLAYSTLEHGTSLKTLYRKSASLDSPVLLVIKDMDNQIFGAYATHPFRFSDHYYGTGETFLYTFSPNFKVFKWSGENTYFINGDMTSLELGGGGGRFGLWLDADLYHGRSNSCSTFNNDILSKKEDFIIQDVEVWTFE.

The span at 1–12 (METKEEKKERRQ) shows a compositional bias: basic and acidic residues. The stretch at 1-29 (METKEEKKERRQGYFARLKKKRQAKQNTE) forms a coiled coil. Disordered regions lie at residues 1 to 51 (METK…DDES), 63 to 83 (DNCK…RKKK), and 99 to 121 (YSTD…SQKP). Positions 25-41 (KQNTETVSANSPGSPVS) are enriched in polar residues. Composition is skewed to basic and acidic residues over residues 68–78 (AGEKETVPEKE) and 99–116 (YSTD…EKKM). Positions 125–168 (IEYTAGNQDTINSIALKFNITPNKLVELNKLFTHTIVPGQILFV) constitute a LysM domain. Disordered stretches follow at residues 335 to 373 (LSKE…QSSE) and 401 to 443 (DPHV…MDRG). The span at 401 to 422 (DPHVKEPSEEKNVSDIRTKEDS) shows a compositional bias: basic and acidic residues. The TLDc domain occupies 746–907 (ALLENMHIEQ…IQDVEVWTFE (162 aa)).

This sequence belongs to the OXR1 family.

The protein resides in the nucleus. Enhances the transcriptional activities of several nuclear receptors. This is Nuclear receptor coactivator 7 (NCOA7) from Gallus gallus (Chicken).